Here is a 340-residue protein sequence, read N- to C-terminus: Nicotinate-nucleotide--dimethylbenzimidazole phosphoribosyltransferase (340 aa).

Glutamate 305 functions as the Proton acceptor in the catalytic mechanism.

It belongs to the CobT family.

It carries out the reaction 5,6-dimethylbenzimidazole + nicotinate beta-D-ribonucleotide = alpha-ribazole 5'-phosphate + nicotinate + H(+). It participates in nucleoside biosynthesis; alpha-ribazole biosynthesis; alpha-ribazole from 5,6-dimethylbenzimidazole: step 1/2. In terms of biological role, catalyzes the synthesis of alpha-ribazole-5'-phosphate from nicotinate mononucleotide (NAMN) and 5,6-dimethylbenzimidazole (DMB). This Allorhizobium ampelinum (strain ATCC BAA-846 / DSM 112012 / S4) (Agrobacterium vitis (strain S4)) protein is Nicotinate-nucleotide--dimethylbenzimidazole phosphoribosyltransferase.